A 153-amino-acid chain; its full sequence is Deoxyuridine 5'-triphosphate nucleotidohydrolase (153 aa).

Substrate is bound by residues 71–73 (RSG), N84, 88–90 (TID), and K98.

The protein belongs to the dUTPase family. Requires Mg(2+) as cofactor.

The catalysed reaction is dUTP + H2O = dUMP + diphosphate + H(+). It functions in the pathway pyrimidine metabolism; dUMP biosynthesis; dUMP from dCTP (dUTP route): step 2/2. Its function is as follows. This enzyme is involved in nucleotide metabolism: it produces dUMP, the immediate precursor of thymidine nucleotides and it decreases the intracellular concentration of dUTP so that uracil cannot be incorporated into DNA. The chain is Deoxyuridine 5'-triphosphate nucleotidohydrolase from Ehrlichia canis (strain Jake).